The chain runs to 348 residues: Phenylalanine--tRNA ligase alpha subunit (348 aa).

Position 259 (glutamate 259) interacts with Mg(2+).

Belongs to the class-II aminoacyl-tRNA synthetase family. Phe-tRNA synthetase alpha subunit type 1 subfamily. Tetramer of two alpha and two beta subunits. Mg(2+) serves as cofactor.

The protein localises to the cytoplasm. It carries out the reaction tRNA(Phe) + L-phenylalanine + ATP = L-phenylalanyl-tRNA(Phe) + AMP + diphosphate + H(+). The polypeptide is Phenylalanine--tRNA ligase alpha subunit (Latilactobacillus sakei subsp. sakei (strain 23K) (Lactobacillus sakei subsp. sakei)).